The chain runs to 491 residues: Ketol-acid reductoisomerase (NADP(+)) (491 aa).

The KARI N-terminal Rossmann domain occupies A15–S208. NADP(+)-binding positions include C45 to Q48, R68, R76, S78, and D108 to Q110. The active site involves H132. G158 contacts NADP(+). 2 consecutive KARI C-terminal knotted domains span residues S209–Q344 and Y345–M484. Mg(2+)-binding residues include D217, E221, E389, and E393. S414 contributes to the substrate binding site.

This sequence belongs to the ketol-acid reductoisomerase family. Requires Mg(2+) as cofactor.

It carries out the reaction (2R)-2,3-dihydroxy-3-methylbutanoate + NADP(+) = (2S)-2-acetolactate + NADPH + H(+). The catalysed reaction is (2R,3R)-2,3-dihydroxy-3-methylpentanoate + NADP(+) = (S)-2-ethyl-2-hydroxy-3-oxobutanoate + NADPH + H(+). The protein operates within amino-acid biosynthesis; L-isoleucine biosynthesis; L-isoleucine from 2-oxobutanoate: step 2/4. It participates in amino-acid biosynthesis; L-valine biosynthesis; L-valine from pyruvate: step 2/4. Involved in the biosynthesis of branched-chain amino acids (BCAA). Catalyzes an alkyl-migration followed by a ketol-acid reduction of (S)-2-acetolactate (S2AL) to yield (R)-2,3-dihydroxy-isovalerate. In the isomerase reaction, S2AL is rearranged via a Mg-dependent methyl migration to produce 3-hydroxy-3-methyl-2-ketobutyrate (HMKB). In the reductase reaction, this 2-ketoacid undergoes a metal-dependent reduction by NADPH to yield (R)-2,3-dihydroxy-isovalerate. The chain is Ketol-acid reductoisomerase (NADP(+)) from Salmonella arizonae (strain ATCC BAA-731 / CDC346-86 / RSK2980).